The primary structure comprises 239 residues: Probable transcriptional regulatory protein BLi00754/BL02339 (239 aa).

This sequence belongs to the TACO1 family. YeeN subfamily.

It localises to the cytoplasm. This is Probable transcriptional regulatory protein BLi00754/BL02339 from Bacillus licheniformis (strain ATCC 14580 / DSM 13 / JCM 2505 / CCUG 7422 / NBRC 12200 / NCIMB 9375 / NCTC 10341 / NRRL NRS-1264 / Gibson 46).